A 553-amino-acid polypeptide reads, in one-letter code: Transcriptional regulator HilA (553 aa).

Positions 11–107 form a DNA-binding region, ompR/PhoB-type; sequence NKKFVFDDFI…LYGQGYRFNR (97 aa). At Asp62 the chain carries 4-aspartylphosphate. One copy of the TPR repeat lies at 372–405; that stretch reads ADIKYYYGWNLFMAGQLEEALQTINECLKLDPTR.

In terms of biological role, the main transcriptional regulator of the Salmonella pathogenicity island 1 (SPI1) gene expression. Activates the expression of invasion genes by a direct action at their promoters and also indirectly by increasing the level of InvF. Also binds upstream of prgH and directly activates the expression of prgHIJK operon. In Salmonella typhimurium (strain LT2 / SGSC1412 / ATCC 700720), this protein is Transcriptional regulator HilA (hilA).